A 30-amino-acid chain; its full sequence is Hainantoxin F6-34.84 (30 aa).

Disulfide bonds link Cys2/Cys15 and Cys9/Cys24.

Belongs to the AVIT (prokineticin) family. As to expression, expressed by the venom gland.

It is found in the secreted. In Cyriopagopus hainanus (Chinese bird spider), this protein is Hainantoxin F6-34.84.